The chain runs to 632 residues: PWWP domain-containing protein 5 (632 aa).

The PWWP domain occupies 97-158; the sequence is DSDLVWAKLR…ASQIKPFHQN (62 aa). The interval 310-452 is disordered; that stretch reads RKTDYKDNAE…AERKISSPDE (143 aa). 4 stretches are compositionally biased toward basic and acidic residues: residues 313–326, 339–364, 371–383, and 425–449; these read DYKD…EKTL, STEK…GKSE, QQKE…HSNE, and KSTE…KISS. A Nuclear localization signal motif is present at residues 352-359; the sequence is KRKVESSE.

The protein belongs to the PDP family. As to quaternary structure, component of the PRC2 (polycomb repressive complex 2) complex which regulates histone methylation on histone H3K27.

The protein localises to the nucleus. May influence gene expression by regulating the function of the PRC2 complex and modulating H3K27me3 level. This Arabidopsis thaliana (Mouse-ear cress) protein is PWWP domain-containing protein 5.